The following is a 209-amino-acid chain: Cilia- and flagella-associated protein 418 (209 aa).

The tract at residues 1–76 (MAKDLDELLD…LINEIFEEPD (76 aa)) is required for interaction with FAM161A. A disordered region spans residues 24–58 (LDLGERPKGDGGGGSHSGDRNGAQEKETLRSTETF). Residues 40 to 58 (SGDRNGAQEKETLRSTETF) show a composition bias toward basic and acidic residues.

Interacts (via N-terminus) with FAM161A (via central region); the interaction is direct. In terms of tissue distribution, expressed in multiple tissues, including the brain, kidney, lung, spleen, heart, trachea and testis. Expressed in the retina (at protein level).

Its subcellular location is the cytoplasm. It localises to the photoreceptor inner segment. In terms of biological role, may be involved in photoreceptor outer segment disk morphogenesis. The sequence is that of Cilia- and flagella-associated protein 418 from Mus musculus (Mouse).